Reading from the N-terminus, the 108-residue chain is Putative lipid-binding protein AIR1B (108 aa).

Positions 1–23 (MAPRTSLALFVSLNLLFFTCTSA) are cleaved as a signal peptide. 3 disulfides stabilise this stretch: cysteine 28/cysteine 55, cysteine 35/cysteine 54, and cysteine 71/cysteine 107.

It belongs to the plant LTP family. PEARLI1 subfamily.

The protein resides in the secreted. The polypeptide is Putative lipid-binding protein AIR1B (AIR1B) (Arabidopsis thaliana (Mouse-ear cress)).